Reading from the N-terminus, the 398-residue chain is Cholinephosphotransferase 1 (398 aa).

Ala2 bears the N-acetylalanine mark. Over 2-62 (AAGAGARPAP…LLQWIPLWMA (61 aa)) the chain is Cytoplasmic. A helical membrane pass occupies residues 63–83 (PNTITLIGLAINLVTTLVLIF). CDP-choline is bound at residue Asn64. Residues 84–93 (YCPTVTEEAP) lie on the Lumenal side of the membrane. The helical transmembrane segment at 94 to 118 (YWTYLLCALGLFIYQSLDAIDGKQA) threads the bilayer. Mg(2+) is bound by residues Asp111 and Asp114. Position 119 (Arg119) interacts with CDP-choline. Over 119–125 (RRTNSCS) the chain is Cytoplasmic. A helical membrane pass occupies residues 126-150 (PLGELFDHGCDSLSTVFMAIGASIA). Residue Asp132 coordinates Mg(2+). The active-site Proton acceptor is the His133. Residue Asp136 coordinates Mg(2+). The Lumenal portion of the chain corresponds to 151–160 (VRLGTHPDWL). The chain crosses the membrane as a helical span at residues 161–179 (FFCSFVGMFMFYCAHWQTY). The Cytoplasmic segment spans residues 180 to 190 (VSGVLRFGRVD). A helical transmembrane segment spans residues 191–207 (VTEIQVALVIVFMLSTF). At 208–222 (GGATMWDYTIPILEI) the chain is on the lumenal side. The chain crosses the membrane as a helical span at residues 223–248 (KLKIVPVLGVVGGLIFSCSNYFHVIL). The Cytoplasmic segment spans residues 249–265 (HGGVGKNGSTIAGTSVL). Residues 266-281 (SPGLHIGLIIILAIMI) form a helical membrane-spanning segment. The Lumenal portion of the chain corresponds to 282–293 (YKKSATNMFEKH). A helical transmembrane segment spans residues 294 to 316 (PCLYTLMFGCVFAKVAQKLVIAH). Residues 317 to 329 (MTKSELYLQDTVF) lie on the Cytoplasmic side of the membrane. A helical membrane pass occupies residues 330-339 (IGPGLLFLDQ). The Lumenal portion of the chain corresponds to 340–346 (YFNNFID). A helical transmembrane segment spans residues 347 to 376 (EYVVLWIAMVISSFDMMIYFTSLCLQISRH). The Cytoplasmic portion of the chain corresponds to 377–398 (LHLNIFKTSCQQAPEQVYKHID).

This sequence belongs to the CDP-alcohol phosphatidyltransferase class-I family. Mg(2+) is required as a cofactor. It depends on Mn(2+) as a cofactor. Expressed in brain, heart, lung, liver, spleen, intestine and muscle. Down-regulated in kidney of type 2 diabetic KK/Ta mice.

It localises to the golgi apparatus membrane. The catalysed reaction is CDP-choline + a 1,2-diacyl-sn-glycerol = a 1,2-diacyl-sn-glycero-3-phosphocholine + CMP + H(+). It catalyses the reaction 1-octadecanoyl-2-(5Z,8Z,11Z,14Z-eicosatetraenoyl)-sn-glycerol + CDP-choline = 1-octadecanoyl-2-(5Z,8Z,11Z,14Z-eicosatetraenoyl)-sn-glycero-3-phosphocholine + CMP + H(+). The enzyme catalyses 1-hexadecanoyl-2-(9Z-octadecenoyl)-sn-glycerol + CDP-choline = 1-hexadecanoyl-2-(9Z-octadecenoyl)-sn-glycero-3-phosphocholine + CMP + H(+). It carries out the reaction 1-hexadecanoyl-2-(4Z,7Z,10Z,13Z,16Z,19Z-docosahexaenoyl)-sn-glycerol + CDP-choline = 1-hexadecanoyl-2-(4Z,7Z,10Z,13Z,16Z,19Z-docosahexaenoyl)-sn-glycero-3-phosphocholine + CMP + H(+). The catalysed reaction is 1,2-dioctanoyl-sn-glycerol + CDP-choline = 1,2-dioctanoyl-sn-glycero-3-phosphocholine + CMP + H(+). Its pathway is phospholipid metabolism; phosphatidylcholine biosynthesis; phosphatidylcholine from phosphocholine: step 2/2. Functionally, catalyzes the final step of de novo phosphatidylcholine (PC) synthesis, i.e. the transfer of choline phosphate from CDP-choline to the free hydroxyl of a diacylglycerol (DAG), producing a PC. It thereby plays a central role in the formation and maintenance of vesicular membranes. In Mus musculus (Mouse), this protein is Cholinephosphotransferase 1.